Reading from the N-terminus, the 516-residue chain is Propionyl-CoA carboxylase, carboxyltransferase subunit (516 aa).

Residues 1–32 (MTMEDRIDELREKREEALKGGGEDRIASQHDK) are disordered. In terms of domain architecture, CoA carboxyltransferase N-terminal spans 3-259 (MEDRIDELRE…NNVEDPPRVE (257 aa)). The region spanning 263–509 (DPERVADELE…KSKRKSQPDK (247 aa)) is the CoA carboxyltransferase C-terminal domain.

The protein belongs to the AccD/PCCB family. The propionyl coenzyme A carboxylase (PCC) complex is composed of three subunits: PccA (biotin carboxylase and biotin-carboxyl carrier), PccB (carboxyltransferase) and PccX.

The enzyme catalyses propanoyl-CoA + hydrogencarbonate + ATP = (S)-methylmalonyl-CoA + ADP + phosphate + H(+). It functions in the pathway metabolic intermediate metabolism; propanoyl-CoA degradation; succinyl-CoA from propanoyl-CoA: step 1/3. Part of the propionyl coenzyme A carboxylase (PCC) complex involved in propionate utilization and in the production of the poly(3-hydroxybutyrate-co-3-hydroxyvalerate)(PHBV), which is a water-insoluble biopolymer used as intracellular energy reserve material when cells grow under conditions of nutrient limitation. The complex catalyzes the carboxylation of propionyl-CoA to methylmalonyl-CoA. PCC is also able to catalyze the carboxylation of acetyl-CoA. This chain is Propionyl-CoA carboxylase, carboxyltransferase subunit, found in Haloferax mediterranei (strain ATCC 33500 / DSM 1411 / JCM 8866 / NBRC 14739 / NCIMB 2177 / R-4) (Halobacterium mediterranei).